The sequence spans 243 residues: Chalcone--flavanone isomerase (243 aa).

Residues T50, N115, and S192 each contribute to the substrate site.

This sequence belongs to the chalcone isomerase family.

It carries out the reaction a chalcone = a flavanone.. It functions in the pathway secondary metabolite biosynthesis; flavonoid biosynthesis. Its function is as follows. Catalyzes the intramolecular cyclization of bicyclic chalcones into tricyclic (S)-flavanones. Responsible for the isomerization of 4,2',4',6'-tetrahydroxychalcone (also termed chalcone) into naringenin. The protein is Chalcone--flavanone isomerase (CHI) of Ipomoea batatas (Sweet potato).